The sequence spans 547 residues: Cytochrome P450 monooxygenase oblB (547 aa).

A run of 2 helical transmembrane segments spans residues 42–62 (GAVG…RLFL) and 242–262 (FDMF…PWLI). N-linked (GlcNAc...) asparagine glycosylation is present at asparagine 277. The helical transmembrane segment at 345 to 365 (VLIGSGTMTTAGTMGFLCYYI) threads the bilayer. Residue cysteine 489 coordinates heme.

This sequence belongs to the cytochrome P450 family. The cofactor is heme.

It is found in the membrane. It carries out the reaction ophiobolin F + 4 reduced [NADPH--hemoprotein reductase] + 4 O2 = ophiobolin C + 4 oxidized [NADPH--hemoprotein reductase] + 6 H2O + 4 H(+). The protein operates within secondary metabolite biosynthesis; terpenoid biosynthesis. Cytochrome P450 monooxygenase; part of the gene cluster that mediates the biosynthesis of the sesterterpenes ophiobolins, fungal phytotoxins with potential anti-cancer activities. The first step of the pathway is performed by the sesterterpene synthase oblA that possesses both prenyl transferase and terpene cyclase activity, converting isopentenyl diphosphate and dimethylallyl diphosphate into geranylfarnesyl diphosphate (GFPP) and further converting GFPP into ophiobolin F, respectively. Other sesterterpenoids (C(25) terpenoids) are found as minor products of oblA. The cytochrome P450 monooxygenase oblB then catalyzes a four-step oxidative transformation of ophiobolin F to yield ophiobolin C. The function of the cytochrome P450 monooxygenase oblE has still to be determined. The polypeptide is Cytochrome P450 monooxygenase oblB (Emericella variicolor (Aspergillus stellatus)).